The following is a 224-amino-acid chain: 7-cyano-7-deazaguanine synthase (224 aa).

Position 7-17 (7-17) interacts with ATP; the sequence is LSGGLDSSTIL. Residues C191, C199, C202, and C205 each contribute to the Zn(2+) site.

The protein belongs to the QueC family. Zn(2+) serves as cofactor.

The catalysed reaction is 7-carboxy-7-deazaguanine + NH4(+) + ATP = 7-cyano-7-deazaguanine + ADP + phosphate + H2O + H(+). It functions in the pathway purine metabolism; 7-cyano-7-deazaguanine biosynthesis. Functionally, catalyzes the ATP-dependent conversion of 7-carboxy-7-deazaguanine (CDG) to 7-cyano-7-deazaguanine (preQ(0)). This is 7-cyano-7-deazaguanine synthase from Nostoc punctiforme (strain ATCC 29133 / PCC 73102).